A 589-amino-acid polypeptide reads, in one-letter code: Aspartate--tRNA ligase (589 aa).

E175 lines the L-aspartate pocket. The segment at 199–202 is aspartate; it reads QLFK. R221 is an L-aspartate binding site. ATP-binding positions include 221-223 and Q230; that span reads RDE. Position 449 (H449) interacts with L-aspartate. ATP is bound at residue E483. R490 serves as a coordination point for L-aspartate. 535–538 contributes to the ATP binding site; it reads GLDR.

This sequence belongs to the class-II aminoacyl-tRNA synthetase family. Type 1 subfamily. Homodimer.

It localises to the cytoplasm. It catalyses the reaction tRNA(Asp) + L-aspartate + ATP = L-aspartyl-tRNA(Asp) + AMP + diphosphate. Functionally, catalyzes the attachment of L-aspartate to tRNA(Asp) in a two-step reaction: L-aspartate is first activated by ATP to form Asp-AMP and then transferred to the acceptor end of tRNA(Asp). This is Aspartate--tRNA ligase from Lysinibacillus sphaericus (strain C3-41).